Reading from the N-terminus, the 287-residue chain is Pyridoxal kinase PdxY (287 aa).

Substrate contacts are provided by residues S9 and 44–45 (MQ). Residues D111, A142, E147, and K180 each coordinate ATP. D221 provides a ligand contact to substrate.

Belongs to the pyridoxine kinase family. PdxY subfamily. As to quaternary structure, homodimer. Mg(2+) is required as a cofactor.

The enzyme catalyses pyridoxal + ATP = pyridoxal 5'-phosphate + ADP + H(+). It functions in the pathway cofactor metabolism; pyridoxal 5'-phosphate salvage; pyridoxal 5'-phosphate from pyridoxal: step 1/1. Functionally, pyridoxal kinase involved in the salvage pathway of pyridoxal 5'-phosphate (PLP). Catalyzes the phosphorylation of pyridoxal to PLP. The chain is Pyridoxal kinase PdxY from Burkholderia pseudomallei (strain K96243).